We begin with the raw amino-acid sequence, 383 residues long: Cobalt-precorrin-5B C(1)-methyltransferase (383 aa).

Belongs to the CbiD family.

It catalyses the reaction Co-precorrin-5B + S-adenosyl-L-methionine = Co-precorrin-6A + S-adenosyl-L-homocysteine. Its pathway is cofactor biosynthesis; adenosylcobalamin biosynthesis; cob(II)yrinate a,c-diamide from sirohydrochlorin (anaerobic route): step 6/10. Functionally, catalyzes the methylation of C-1 in cobalt-precorrin-5B to form cobalt-precorrin-6A. This chain is Cobalt-precorrin-5B C(1)-methyltransferase, found in Prochlorococcus marinus (strain MIT 9313).